The sequence spans 273 residues: Dermonecrotic toxin LhSicTox-alphaIA2aii (273 aa).

Histidine 5 is an active-site residue. 2 residues coordinate Mg(2+): glutamate 25 and aspartate 27. The active-site Nucleophile is histidine 41. 2 disulfide bridges follow: cysteine 45–cysteine 51 and cysteine 47–cysteine 190. Aspartate 85 contributes to the Mg(2+) binding site.

It belongs to the arthropod phospholipase D family. Class II subfamily. The cofactor is Mg(2+). Expressed by the venom gland.

The protein resides in the secreted. It carries out the reaction an N-(acyl)-sphingosylphosphocholine = an N-(acyl)-sphingosyl-1,3-cyclic phosphate + choline. The enzyme catalyses an N-(acyl)-sphingosylphosphoethanolamine = an N-(acyl)-sphingosyl-1,3-cyclic phosphate + ethanolamine. It catalyses the reaction a 1-acyl-sn-glycero-3-phosphocholine = a 1-acyl-sn-glycero-2,3-cyclic phosphate + choline. The catalysed reaction is a 1-acyl-sn-glycero-3-phosphoethanolamine = a 1-acyl-sn-glycero-2,3-cyclic phosphate + ethanolamine. In terms of biological role, dermonecrotic toxins cleave the phosphodiester linkage between the phosphate and headgroup of certain phospholipids (sphingolipid and lysolipid substrates), forming an alcohol (often choline) and a cyclic phosphate. This toxin acts on sphingomyelin (SM). It may also act on ceramide phosphoethanolamine (CPE), lysophosphatidylcholine (LPC) and lysophosphatidylethanolamine (LPE), but not on lysophosphatidylserine (LPS), and lysophosphatidylglycerol (LPG). It acts by transphosphatidylation, releasing exclusively cyclic phosphate products as second products. Induces dermonecrosis, hemolysis, increased vascular permeability, edema, inflammatory response, and platelet aggregation. The polypeptide is Dermonecrotic toxin LhSicTox-alphaIA2aii (Loxosceles hirsuta (Recluse spider)).